The following is a 292-amino-acid chain: CCR4-NOT transcription complex subunit 8 (292 aa).

Residues D40, E42, D161, and D230 each contribute to the a divalent metal cation site.

The protein belongs to the CAF1 family. In terms of assembly, component of the CCR4-NOT complex; distinct complexes seem to exist that differ in the participation of probably mutually exclusive catalytic subunits; the complex contains two deadenylase subunits, CNOT6 or CNOT6L, and CNOT7 or CNOT8. In the complex interacts directly with CNOT1. Interacts with BTG1, BTG2 and TOB1. Interacts with BTG4.

The protein resides in the cytoplasm. It localises to the nucleus. It carries out the reaction Exonucleolytic cleavage of poly(A) to 5'-AMP.. Its function is as follows. Has 3'-5' poly(A) exoribonuclease activity for synthetic poly(A) RNA substrate. Its function seems to be partially redundant with that of CNOT7. Catalytic component of the CCR4-NOT complex which is linked to various cellular processes including bulk mRNA degradation, miRNA-mediated repression, translational repression during translational initiation and general transcription regulation. During miRNA-mediated repression the complex also seems to act as translational repressor during translational initiation. Additional complex functions may be a consequence of its influence on mRNA expression. Associates with members of the BTG family such as TOB1 and BTG2 and is required for their anti-proliferative activity. The chain is CCR4-NOT transcription complex subunit 8 (Cnot8) from Mus musculus (Mouse).